Reading from the N-terminus, the 200-residue chain is Ciliary neurotrophic factor (200 aa).

Belongs to the CNTF family. In terms of tissue distribution, nervous system.

The protein resides in the cytoplasm. Its function is as follows. CNTF is a survival factor for various neuronal cell types. Seems to prevent the degeneration of motor axons after axotomy. This chain is Ciliary neurotrophic factor (CNTF), found in Sus scrofa (Pig).